The sequence spans 95 residues: uncharacterized protein (95 aa).

The first 17 residues, 1–17 (MTSSLVIYIFLWSRLIC), serve as a signal peptide directing secretion.

This is an uncharacterized protein from Saccharomyces cerevisiae (strain ATCC 204508 / S288c) (Baker's yeast).